The sequence spans 117 residues: Large ribosomal subunit protein uL18 (117 aa).

Belongs to the universal ribosomal protein uL18 family. In terms of assembly, part of the 50S ribosomal subunit; part of the 5S rRNA/L5/L18/L25 subcomplex. Contacts the 5S and 23S rRNAs.

This is one of the proteins that bind and probably mediate the attachment of the 5S RNA into the large ribosomal subunit, where it forms part of the central protuberance. The sequence is that of Large ribosomal subunit protein uL18 from Mycoplasma mobile (strain ATCC 43663 / 163K / NCTC 11711) (Mesomycoplasma mobile).